Here is a 1500-residue protein sequence, read N- to C-terminus: Host cell factor (1500 aa).

5 Kelch repeats span residues 85–133, 135–181, 189–237, 259–307, and 308–373; these read LMVV…VEGT, MFVF…RLGH, KIFL…TYGD, NLLI…MIGN, and KMYV…GIQS. Phosphoserine is present on serine 477. Over residues 517–528 the composition is skewed to polar residues; sequence LLQSMSQPSSPA. Residues 517-543 are disordered; the sequence is LLQSMSQPSSPASRADKDPLSSGGGTT. Phosphoserine is present on residues serine 958 and serine 966. Positions 1024–1061 are disordered; the sequence is SEGQHGSEENENNGENATSSSASALFTGGDTAGPSRAQ. Positions 1036–1047 are enriched in low complexity; sequence NGENATSSSASA. Threonine 1126 is subject to Phosphothreonine. The tract at residues 1161 to 1185 is disordered; that stretch reads IGSLKENQDENKKFKQRQESSPSQN. The span at 1166-1178 shows a compositional bias: basic and acidic residues; the sequence is ENQDENKKFKQRQ. 2 consecutive Fibronectin type-III domains span residues 1244-1341 and 1346-1457; these read VQST…TCLP and APSA…DPAA. The tract at residues 1458–1500 is disordered; the sequence is AKQHTPTVTPNLKRGPEKSTIGSSNIANTFCSPHKRGRNGLHD. A Bipartite nuclear localization signal motif is present at residues 1470 to 1495; the sequence is KRGPEKSTIGSSNIANTFCSPHKRGR. Over residues 1477–1488 the composition is skewed to polar residues; that stretch reads TIGSSNIANTFC. Residue serine 1489 is modified to Phosphoserine. The span at 1490 to 1500 shows a compositional bias: basic residues; it reads PHKRGRNGLHD.

In terms of assembly, core component of several methyltransferase-containing complexes. Component of the SET1 complex, composed at least of the catalytic subunit Set1, wds/WDR5, Wdr82, Rbbp5, ash2, Cfp1/CXXC1, hcf and Dpy-30L1. Component of the MLL3/4 complex composed at least of the catalytic subunit trr, ash2, Rbbp5, Dpy-30L1, wds, hcf, ptip, Pa1, Utx, Lpt and Ncoa6. Component of the Ada2a-containing (ATAC) complex composed of at least Ada2a, Atac1, Hcf, Ada3, Gcn5, Mocs2B, Charac-14, Atac3, Atac2, NC2beta and wds. Proteolytic cleavage occurs between amino acids 900 and 1100 within the non-conserved central region, giving rise to two independent but tightly associated N- and C-terminal subunits.

It is found in the nucleus. In terms of biological role, may be involved in control of the cell cycle. The polypeptide is Host cell factor (Drosophila melanogaster (Fruit fly)).